The chain runs to 124 residues: Small ribosomal subunit protein uS12 (124 aa).

The residue at position 89 (Asp-89) is a 3-methylthioaspartic acid.

This sequence belongs to the universal ribosomal protein uS12 family. As to quaternary structure, part of the 30S ribosomal subunit. Contacts proteins S8 and S17. May interact with IF1 in the 30S initiation complex.

Functionally, with S4 and S5 plays an important role in translational accuracy. Interacts with and stabilizes bases of the 16S rRNA that are involved in tRNA selection in the A site and with the mRNA backbone. Located at the interface of the 30S and 50S subunits, it traverses the body of the 30S subunit contacting proteins on the other side and probably holding the rRNA structure together. The combined cluster of proteins S8, S12 and S17 appears to hold together the shoulder and platform of the 30S subunit. The protein is Small ribosomal subunit protein uS12 of Blochmanniella pennsylvanica (strain BPEN).